Consider the following 586-residue polypeptide: Phosphoenolpyruvate-protein phosphotransferase (586 aa).

The Tele-phosphohistidine intermediate role is filled by H201. Residues R308 and R345 each coordinate phosphoenolpyruvate. 2 residues coordinate Mg(2+): E446 and D470. Phosphoenolpyruvate is bound by residues N469 to D470 and R480. The active-site Proton donor is C517.

Belongs to the PEP-utilizing enzyme family. As to quaternary structure, homodimer. It depends on Mg(2+) as a cofactor.

The protein resides in the cytoplasm. It catalyses the reaction L-histidyl-[protein] + phosphoenolpyruvate = N(pros)-phospho-L-histidyl-[protein] + pyruvate. General (non sugar-specific) component of the phosphoenolpyruvate-dependent sugar phosphotransferase system (sugar PTS). This major carbohydrate active-transport system catalyzes the phosphorylation of incoming sugar substrates concomitantly with their translocation across the cell membrane. Enzyme I transfers the phosphoryl group from phosphoenolpyruvate (PEP) to the phosphoryl carrier protein (HPr). This Cupriavidus necator (strain ATCC 17699 / DSM 428 / KCTC 22496 / NCIMB 10442 / H16 / Stanier 337) (Ralstonia eutropha) protein is Phosphoenolpyruvate-protein phosphotransferase.